The chain runs to 486 residues: Ribulose bisphosphate carboxylase large chain (486 aa).

The substrate site is built by N126 and T176. K178 acts as the Proton acceptor in catalysis. K180 serves as a coordination point for substrate. K204, D206, and E207 together coordinate Mg(2+). At K204 the chain carries N6-carboxylysine. H296 acts as the Proton acceptor in catalysis. Residues R297, H329, and S381 each coordinate substrate.

The protein belongs to the RuBisCO large chain family. Type I subfamily. Heterohexadecamer of 8 large chains and 8 small chains. Mg(2+) is required as a cofactor.

The enzyme catalyses 2 (2R)-3-phosphoglycerate + 2 H(+) = D-ribulose 1,5-bisphosphate + CO2 + H2O. It catalyses the reaction D-ribulose 1,5-bisphosphate + O2 = 2-phosphoglycolate + (2R)-3-phosphoglycerate + 2 H(+). In terms of biological role, ruBisCO catalyzes two reactions: the carboxylation of D-ribulose 1,5-bisphosphate, the primary event in carbon dioxide fixation, as well as the oxidative fragmentation of the pentose substrate. Both reactions occur simultaneously and in competition at the same active site. This Methylacidiphilum infernorum (isolate V4) (Methylokorus infernorum (strain V4)) protein is Ribulose bisphosphate carboxylase large chain.